A 762-amino-acid chain; its full sequence is cGMP-dependent protein kinase 2 (762 aa).

The tract at residues 1–25 is disordered; it reads MGNGSVKPKHSKHPDGQSGNLSNEA. The N-myristoyl glycine moiety is linked to residue Gly-2. Ser-110 and Ser-117 each carry phosphoserine. Residues 112 to 138 form a disordered region; the sequence is LVSLHSRRGAKAGVSAEPTSRTYDLNK. Positions 168 to 283 are cGMP-binding, high affinity; cAMP-binding, moderate affinity; sequence FLKRLDPQQI…DEEYRNFLRS (116 aa). 3',5'-cyclic GMP contacts are provided by residues 232–235, 242–243, Lys-347, 356–359, 366–367, Asp-412, and Arg-415; these read GELA, RT, GEKA, and RS. The interval 286-416 is cGMP-binding, high affinity; cAMP-binding, low affinity; sequence LLKNLPEDKL…TLNRDDEKRH (131 aa). The residue at position 431 (Ser-431) is a Phosphoserine. In terms of domain architecture, Protein kinase spans 453–711; that stretch reads LEIIATLGVG…INDIKKHRWL (259 aa). ATP-binding positions include 459–467 and Lys-482; that span reads LGVGGFGRV. Asp-576 functions as the Proton acceptor in the catalytic mechanism. The residue at position 609 (Thr-609) is a Phosphothreonine. The AGC-kinase C-terminal domain maps to 712-762; that stretch reads NGFNWEGLKARSLPSPLRRELSGPIDHSYFDKYPPEKGVPPDEMSGWDKDF. A disordered region spans residues 740 to 762; it reads YFDKYPPEKGVPPDEMSGWDKDF.

This sequence belongs to the protein kinase superfamily. AGC Ser/Thr protein kinase family. cGMP subfamily. As to quaternary structure, interacts with GRIA1/GLUR1. Myristoylation mediates membrane localization. As to expression, highly expressed in intestinal mucosa and is 20 times less abundant in brain and kidney. Expressed in jejunum, in the apical domain of the villus epithelium.

It localises to the apical cell membrane. The protein localises to the cell membrane. The enzyme catalyses L-seryl-[protein] + ATP = O-phospho-L-seryl-[protein] + ADP + H(+). It carries out the reaction L-threonyl-[protein] + ATP = O-phospho-L-threonyl-[protein] + ADP + H(+). With respect to regulation, binding of cGMP results in enzyme activation. In terms of biological role, crucial regulator of intestinal secretion and bone growth. Phosphorylates and activates CFTR on the plasma membrane. Plays a key role in intestinal secretion by regulating cGMP-dependent translocation of CFTR in jejunum. Acts downstream of NMDAR to activate the plasma membrane accumulation of GRIA1/GLUR1 in synapse and increase synaptic plasticity. Phosphorylates GRIA1/GLUR1 at Ser-863. Acts as regulator of gene expression and activator of the extracellular signal-regulated kinases MAPK3/ERK1 and MAPK1/ERK2 in mechanically stimulated osteoblasts. Under fluid shear stress, mediates ERK activation and subsequent induction of FOS, FOSL1/FRA1, FOSL2/FRA2 and FOSB that play a key role in the osteoblast anabolic response to mechanical stimulation. The sequence is that of cGMP-dependent protein kinase 2 (Prkg2) from Rattus norvegicus (Rat).